A 428-amino-acid chain; its full sequence is L-rhamnonate dehydratase (428 aa).

Substrate contacts are provided by histidine 56 and arginine 82. 3 residues coordinate Mg(2+): aspartate 249, glutamate 275, and glutamate 303. The Proton acceptor role is filled by histidine 352. A substrate-binding site is contributed by glutamate 372.

It belongs to the mandelate racemase/muconate lactonizing enzyme family. RhamD subfamily. Homooctamer; tetramer of dimers. Mg(2+) is required as a cofactor.

The enzyme catalyses L-rhamnonate = 2-dehydro-3-deoxy-L-rhamnonate + H2O. Functionally, catalyzes the dehydration of L-rhamnonate to 2-keto-3-deoxy-L-rhamnonate (KDR). This chain is L-rhamnonate dehydratase, found in Shigella sonnei (strain Ss046).